The primary structure comprises 296 residues: Nucleotide-binding protein stu0831 (296 aa).

13 to 20 is a binding site for ATP; sequence GMSGAGKT. 63–66 provides a ligand contact to GTP; it reads DMRS.

It belongs to the RapZ-like family.

Displays ATPase and GTPase activities. The polypeptide is Nucleotide-binding protein stu0831 (Streptococcus thermophilus (strain ATCC BAA-250 / LMG 18311)).